The following is a 649-amino-acid chain: DNA ligase (649 aa).

NAD(+) contacts are provided by residues 62–66 and 104–105; these read DSTYD and ST. Lys-142 acts as the N6-AMP-lysine intermediate in catalysis. Positions 158, 189, and 301 each coordinate NAD(+). Residues Cys-389, Cys-392, Cys-405, and Cys-411 each coordinate Zn(2+). The BRCT domain occupies 569–649; sequence PGETPVFGKI…LDYLALISTY (81 aa).

Belongs to the NAD-dependent DNA ligase family. LigA subfamily. It depends on Mg(2+) as a cofactor. Mn(2+) serves as cofactor.

It catalyses the reaction NAD(+) + (deoxyribonucleotide)n-3'-hydroxyl + 5'-phospho-(deoxyribonucleotide)m = (deoxyribonucleotide)n+m + AMP + beta-nicotinamide D-nucleotide.. Functionally, DNA ligase that catalyzes the formation of phosphodiester linkages between 5'-phosphoryl and 3'-hydroxyl groups in double-stranded DNA using NAD as a coenzyme and as the energy source for the reaction. It is essential for DNA replication and repair of damaged DNA. This is DNA ligase from Psychromonas ingrahamii (strain DSM 17664 / CCUG 51855 / 37).